We begin with the raw amino-acid sequence, 1088 residues long: uncharacterized protein (1088 aa).

Phosphoserine is present on S299. The segment at 954–980 (PRSSVATTASTESSEQGPKMKRMARRK) is disordered. Over residues 956–968 (SSVATTASTESSE) the composition is skewed to low complexity. S984 is subject to Phosphoserine. A Phosphothreonine modification is found at T1013. Positions 1063-1088 (MKVTDKAKDEDIDPMDPMSPLNKDVS) are disordered. S1081 is subject to Phosphoserine.

This is an uncharacterized protein from Saccharomyces cerevisiae (strain ATCC 204508 / S288c) (Baker's yeast).